A 91-amino-acid polypeptide reads, in one-letter code: Small ribosomal subunit protein uS19 (91 aa).

The protein belongs to the universal ribosomal protein uS19 family.

Its function is as follows. Protein S19 forms a complex with S13 that binds strongly to the 16S ribosomal RNA. The chain is Small ribosomal subunit protein uS19 from Marinobacter nauticus (strain ATCC 700491 / DSM 11845 / VT8) (Marinobacter aquaeolei).